A 73-amino-acid chain; its full sequence is MTTKKTSSVVLPLLLVFALILMPMVAGQLKSTCRIAEAWKGAKECNAKCAALGTTRGGVCQKFLGDLYCCCWD.

Residues 1–27 form the signal peptide; sequence MTTKKTSSVVLPLLLVFALILMPMVAG. 3 disulfides stabilise this stretch: cysteine 33-cysteine 71, cysteine 45-cysteine 69, and cysteine 49-cysteine 70.

It belongs to the DEFL family.

The protein localises to the secreted. This Arabidopsis thaliana (Mouse-ear cress) protein is Defensin-like protein 87.